Consider the following 95-residue polypeptide: Aspartyl/glutamyl-tRNA(Asn/Gln) amidotransferase subunit C (95 aa).

It belongs to the GatC family. In terms of assembly, heterotrimer of A, B and C subunits.

The catalysed reaction is L-glutamyl-tRNA(Gln) + L-glutamine + ATP + H2O = L-glutaminyl-tRNA(Gln) + L-glutamate + ADP + phosphate + H(+). It carries out the reaction L-aspartyl-tRNA(Asn) + L-glutamine + ATP + H2O = L-asparaginyl-tRNA(Asn) + L-glutamate + ADP + phosphate + 2 H(+). Its function is as follows. Allows the formation of correctly charged Asn-tRNA(Asn) or Gln-tRNA(Gln) through the transamidation of misacylated Asp-tRNA(Asn) or Glu-tRNA(Gln) in organisms which lack either or both of asparaginyl-tRNA or glutaminyl-tRNA synthetases. The reaction takes place in the presence of glutamine and ATP through an activated phospho-Asp-tRNA(Asn) or phospho-Glu-tRNA(Gln). This Phenylobacterium zucineum (strain HLK1) protein is Aspartyl/glutamyl-tRNA(Asn/Gln) amidotransferase subunit C.